Here is a 1191-residue protein sequence, read N- to C-terminus: Laminin subunit gamma-2 (1191 aa).

The N-terminal stretch at 1–21 is a signal peptide; that stretch reads MPALWLSCCLGVALLLPAAQA. Cystine bridges form between cysteine 28–cysteine 37, cysteine 30–cysteine 53, cysteine 56–cysteine 65, cysteine 68–cysteine 81, cysteine 84–cysteine 96, cysteine 86–cysteine 102, cysteine 104–cysteine 113, cysteine 116–cysteine 128, cysteine 139–cysteine 150, cysteine 141–cysteine 155, cysteine 157–cysteine 166, and cysteine 169–cysteine 184. Laminin EGF-like domains follow at residues 28–83, 84–130, and 139–186; these read CDCN…RCLP, CNCH…GCTR, and CDCD…GCTQ. A Laminin EGF-like 4; first part domain is found at 187 to 196; that stretch reads CFCYGHSASC. The Laminin IV type A domain occupies 213–381; sequence QDVDGWKAVQ…SGAPAPWVER (169 aa). 2 N-linked (GlcNAc...) asparagine glycosylation sites follow: asparagine 342 and asparagine 362. The Laminin EGF-like 4; second part domain occupies 382 to 415; the sequence is CVCPAGYKGQFCQECASGYKRDSARLGPFGACVP. Laminin EGF-like domains follow at residues 416 to 461, 462 to 516, and 517 to 572; these read CNCQ…SCKP, CPCH…PCQR, and CQCN…KCRA. Intrachain disulfides connect cysteine 462/cysteine 470, cysteine 464/cysteine 481, cysteine 484/cysteine 493, cysteine 496/cysteine 514, cysteine 517/cysteine 531, cysteine 519/cysteine 538, cysteine 541/cysteine 550, cysteine 553/cysteine 570, cysteine 573/cysteine 585, cysteine 575/cysteine 591, and cysteine 593/cysteine 602. Asparagine 526 carries N-linked (GlcNAc...) asparagine glycosylation. Residues 573–602 enclose the Laminin EGF-like 8; truncated domain; that stretch reads CNCSPMGSEPGECRGDGSCVCKPGFGGLNC. Residues 586-588 carry the Cell attachment site motif; the sequence is RGD. The interval 603-1191 is domain II and I; that stretch reads DHAALTSCPA…CYNTQALEQQ (589 aa). Coiled coils occupy residues 612–710 and 759–786; these read ACYN…IRAL and LAQE…ETED. Residue serine 805 is glycosylated (O-linked (Xyl...) (chondroitin sulfate) serine). An N-linked (GlcNAc...) asparagine glycan is attached at asparagine 941. A coiled-coil region spans residues 946-996; it reads EVENILKNLREFDLQVEDRKAEAEEAMKRLSSISQKVADASDKTQQAETAL. Asparagine 1032 is a glycosylation site (N-linked (GlcNAc...) asparagine). The stretch at 1139 to 1178 forms a coiled coil; sequence LMSDLEERVRRQRNHLHLLETSIDGILADVKNLENIRDNL.

In terms of assembly, laminin is a complex glycoprotein, consisting of three different polypeptide chains (alpha, beta, gamma), which are bound to each other by disulfide bonds into a cross-shaped molecule comprising one long and three short arms with globules at each end. Gamma-2 is a subunit of laminin-5 (laminin-332 or epiligrin/kalinin/nicein). Binds to fibulin-1, fibulin-1c, fibulin-2 and nidogen. O-glycosylated; contains chondroitin sulfate (CS). As to expression, epithelial cells of many tissues, particularly high levels in tongue, hair follicles and kidney. Basement membranes of the collecting tubules of kidney and pancreas.

The protein resides in the secreted. The protein localises to the extracellular space. It localises to the extracellular matrix. Its subcellular location is the basement membrane. Functionally, binding to cells via a high affinity receptor, laminin is thought to mediate the attachment, migration and organization of cells into tissues during embryonic development by interacting with other extracellular matrix components. This is Laminin subunit gamma-2 (Lamc2) from Mus musculus (Mouse).